Consider the following 478-residue polypeptide: MPAGSRAGSRLRSGSLPRPSRLTLKALRPAYAPRTPDSNGDLDTGSELGPGSPAPTAEEVEKEMAGPSQLCIRRWTTKHVAVWLKDEGFFEYVDILCNKHRLDGITLLTLTEYDLRSPPLEIKVLGDIKRLMLSVRKLQKIHTDVLEEMGYNSDSPMSPMTPFLSALQSADWLCNGEPTHSCDGPIPDLSSDQYQYMNGKNKHSARRLDPEYWKTILSCVYVFIVFGFTSFIMVIVHERVPDMQTYPPLPDIFLDSVPRIPWAFSMTEVCGVILCYIWILVLLLHKHRSILLRRLCSLMGTVFLLRCFTMFVTSLSVPGQHLQCTGKIYGSVWEKLRRAFAIWSGFGMTLTGVHTCGDYMFSGHTVVLTMLNFFVTEYTPRSWNFLHTLSWVLNLFGIFFILAAHEHYSIDVFIAFYITTRLFLYYHTLANTRAYHQSRRARIWFPMFSFFECNVNGTVPNEYCWPFSKPAIMKRLIG.

A compositionally biased stretch (low complexity) spans 1 to 22 (MPAGSRAGSRLRSGSLPRPSRL). The segment at 1-65 (MPAGSRAGSR…TAEEVEKEMA (65 aa)) is disordered. Residues 75–141 (WTTKHVAVWL…MLSVRKLQKI (67 aa)) form the SAM domain. 6 consecutive transmembrane segments (helical) span residues 216–236 (ILSCVYVFIVFGFTSFIMVIV), 264–284 (FSMTEVCGVILCYIWILVLLL), 295–315 (LCSLMGTVFLLRCFTMFVTSL), 341–361 (AIWSGFGMTLTGVHTCGDYMF), 385–405 (FLHTLSWVLNLFGIFFILAAH), and 410–430 (IDVFIAFYITTRLFLYYHTLA). Residues 431–478 (NTRAYHQSRRARIWFPMFSFFECNVNGTVPNEYCWPFSKPAIMKRLIG) lie on the Cytoplasmic side of the membrane.

It belongs to the sphingomyelin synthase family. Expressed ubiquitously with highest levels in macrophages and testis.

It localises to the endoplasmic reticulum membrane. The catalysed reaction is an N-acylsphing-4-enine + a 1,2-diacyl-sn-glycero-3-phosphoethanolamine = an N-acylsphing-4-enine 1-phosphoethanolamine + a 1,2-diacyl-sn-glycerol. The enzyme catalyses an N-acylsphinganine + a 1,2-diacyl-sn-glycero-3-phosphoethanolamine = an N-acylsphinganine-1-phosphoethanolamine + a 1,2-diacyl-sn-glycerol. It catalyses the reaction an N-acyl-(4R)-4-hydroxysphinganine + a 1,2-diacyl-sn-glycero-3-phosphoethanolamine = an N-acyl-(4R)-4-hydroxysphinganine-1-phosphoethanolamine + a 1,2-diacyl-sn-glycerol. It carries out the reaction N-hexadecanoylsphinganine + a 1,2-diacyl-sn-glycero-3-phosphoethanolamine = N-hexadecanoyl-sphinganine-1-phosphoethanolamine + a 1,2-diacyl-sn-glycerol. The catalysed reaction is N-hexadecanoyl-(4R)-hydroxysphinganine + a 1,2-diacyl-sn-glycero-3-phosphoethanolamine = N-hexadecanoyl-(4R)-hydroxysphinganine-1-phosphoethanolamine + a 1,2-diacyl-sn-glycerol. It participates in sphingolipid metabolism. Functionally, synthesizes sphingolipids through transfer of a phosphatidyl head group from a glycerophospholipid on to the primary hydroxyl of a ceramide in the lumen of the endoplasmic reticulum. Catalyzes the synthesis of ceramide phosphoethanolamines (CPEs) (such as N-acylsphing-4-enine 1-phosphoethanolamine) by transferring phosphoethanolamine head group, which is smaller and more hydrophilic than the phosphocholine (PC) headgroup transferred in the canonical sphingomyelin synthesis (SMS) reaction by SMS1 or SMS2, from a phosphatidylethanolamine (1,2-diacyl-sn-glycero-3-phosphoethanolamine, PE) to a ceramide (such as N-acylsphing-4-enine). The larger PC prevents an efficient fit in the enzyme's catalytic pocket, leading to little or no SMS activity. In vitro, in the absence of ceramide, it has PLC activity with preference for phosphatidylinositol and phosphatidic acid, but also hydrolyzes phosphatidylethanolamine. The polypeptide is Sphingomyelin synthase-related protein 1 (Mus musculus (Mouse)).